Here is a 1006-residue protein sequence, read N- to C-terminus: Unconventional myosin-Id (1006 aa).

Ala-2 is modified (N-acetylalanine). Residues 9 to 695 form the Myosin motor domain; that stretch reads FGKADFVLMD…TLFTLEELRA (687 aa). An ATP-binding site is contributed by 102–109; it reads GESGAGKT. Residue Ser-200 is modified to Phosphoserine. Position 536 is a phosphotyrosine (Tyr-536). Positions 572–594 are actin-binding; sequence MIALVDNLASKEPYYVRCIKPND. IQ domains follow at residues 699 to 719 and 721 to 741; these read IRIVLFLQKVWRGTLARMRYK and TKAALTIIRYYRRYKVKSYIH. The region spanning 812 to 1005 is the TH1 domain; that stretch reads GQRADLGLQR…RSGFILSVPG (194 aa).

It belongs to the TRAFAC class myosin-kinesin ATPase superfamily. Myosin family. Interacts (via the two IQ motifs) with calmodulin. Binds an additional calmodulin chain via a third, C-terminal region. Interacts with F-actin. In terms of tissue distribution, expressed in many tissues. Highest levels in brain, followed by lung and ovary; expression is lowest in spleen.

Its subcellular location is the cytoplasm. The protein localises to the perikaryon. It is found in the cell projection. The protein resides in the dendrite. It localises to the early endosome. Its subcellular location is the cell cortex. Its function is as follows. Unconventional myosin that functions as actin-based motor protein with ATPase activity. Plays a role in endosomal protein trafficking, and especially in the transfer of cargo proteins from early to recycling endosomes. Required for normal planar cell polarity in ciliated tracheal cells, for normal rotational polarity of cilia, and for coordinated, unidirectional ciliary movement in the trachea. Required for normal, polarized cilia organization in brain ependymal epithelial cells. This is Unconventional myosin-Id (MYO1D) from Homo sapiens (Human).